We begin with the raw amino-acid sequence, 103 residues long: Matrix Gla protein (103 aa).

An N-terminal signal peptide occupies residues 1 to 19 (MKSLLPLAILAALAVAALC). A 4-carboxyglutamate modification is found at Glu-21. Residues Ser-22, Ser-25, and Ser-28 each carry the phosphoserine modification. One can recognise a Gla domain in the interval 51-97 (HAKAQERVRELNKPAQEINREACDDYKLCERYALIYGYNAAYNRYFR). Residues Glu-56, Glu-60, Glu-67, and Glu-71 each carry the 4-carboxyglutamate modification. Cys-73 and Cys-79 form a disulfide bridge.

The protein belongs to the osteocalcin/matrix Gla protein family. Requires vitamin K-dependent gamma-carboxylation for its function.

It is found in the secreted. Functionally, associates with the organic matrix of bone and cartilage. Thought to act as an inhibitor of bone formation. The protein is Matrix Gla protein (Mgp) of Rattus norvegicus (Rat).